Reading from the N-terminus, the 840-residue chain is Translation initiation factor IF-2 (840 aa).

Positions 1–251 (MTEEKKFSSS…GPAVPATERK (251 aa)) are disordered. Polar residues-rich tracts occupy residues 38-50 (DGTNSSAGTTPRS) and 65-83 (NRHTNSSRSNTQGGNASRP). Residues 84–102 (NQSKSQGQGGRNNQRPGSR) show a composition bias toward low complexity. 2 stretches are compositionally biased toward basic and acidic residues: residues 110-135 (PMIREKKNWSTKPREGQIDYSKKTDN) and 158-168 (KPAEQSKKAAE). A compositionally biased stretch (low complexity) spans 169–207 (KPAQTKPKTAETKTTATTTQSGTGKFGGALASGNNSARN). Basic residues predominate over residues 230–239 (GSKKSRRIAA). One can recognise a tr-type G domain in the interval 341-510 (ARPPVVTIMG…LLQAEVLELK (170 aa)). The interval 350–357 (GHVDHGKT) is G1. 350–357 (GHVDHGKT) is a GTP binding site. The interval 375–379 (GITQH) is G2. The G3 stretch occupies residues 396-399 (DTPG). Residues 396–400 (DTPGH) and 450–453 (NKID) each bind GTP. Positions 450-453 (NKID) are G4. The interval 486–488 (SAK) is G5.

The protein belongs to the TRAFAC class translation factor GTPase superfamily. Classic translation factor GTPase family. IF-2 subfamily.

The protein resides in the cytoplasm. Its function is as follows. One of the essential components for the initiation of protein synthesis. Protects formylmethionyl-tRNA from spontaneous hydrolysis and promotes its binding to the 30S ribosomal subunits. Also involved in the hydrolysis of GTP during the formation of the 70S ribosomal complex. The chain is Translation initiation factor IF-2 from Leuconostoc citreum (strain KM20).